The primary structure comprises 371 residues: Probable tRNA sulfurtransferase (371 aa).

Positions 54–156 (NANIEALSEV…NEMTYFYHKV (103 aa)) constitute a THUMP domain. Residues 174-175 (LF), 199-200 (NF), lysine 254, glycine 276, and glutamine 285 each bind ATP.

It belongs to the ThiI family.

The protein resides in the cytoplasm. The enzyme catalyses [ThiI sulfur-carrier protein]-S-sulfanyl-L-cysteine + a uridine in tRNA + 2 reduced [2Fe-2S]-[ferredoxin] + ATP + H(+) = [ThiI sulfur-carrier protein]-L-cysteine + a 4-thiouridine in tRNA + 2 oxidized [2Fe-2S]-[ferredoxin] + AMP + diphosphate. It catalyses the reaction [ThiS sulfur-carrier protein]-C-terminal Gly-Gly-AMP + S-sulfanyl-L-cysteinyl-[cysteine desulfurase] + AH2 = [ThiS sulfur-carrier protein]-C-terminal-Gly-aminoethanethioate + L-cysteinyl-[cysteine desulfurase] + A + AMP + 2 H(+). Its pathway is cofactor biosynthesis; thiamine diphosphate biosynthesis. In terms of biological role, catalyzes the ATP-dependent transfer of a sulfur to tRNA to produce 4-thiouridine in position 8 of tRNAs, which functions as a near-UV photosensor. Also catalyzes the transfer of sulfur to the sulfur carrier protein ThiS, forming ThiS-thiocarboxylate. This is a step in the synthesis of thiazole, in the thiamine biosynthesis pathway. The sulfur is donated as persulfide by IscS. The protein is Probable tRNA sulfurtransferase of Saccharolobus solfataricus (strain ATCC 35092 / DSM 1617 / JCM 11322 / P2) (Sulfolobus solfataricus).